The primary structure comprises 906 residues: NADH-quinone oxidoreductase subunit G (906 aa).

The 82-residue stretch at 2 to 83 (AKIYVDSKIY…GAIISIKSTE (82 aa)) folds into the 2Fe-2S ferredoxin-type domain. Residues cysteine 34, cysteine 45, cysteine 48, and cysteine 67 each coordinate [2Fe-2S] cluster. Positions 83–122 (ESEVFRSAIVELLLTNHPHDCPVCEEGGHCHLQDMTVMVK) constitute a 4Fe-4S His(Cys)3-ligated-type domain. [4Fe-4S] cluster contacts are provided by histidine 99, cysteine 103, cysteine 106, cysteine 112, cysteine 151, cysteine 154, cysteine 157, cysteine 201, cysteine 228, cysteine 231, cysteine 235, and cysteine 263. Positions 221–277 (MQYAPGICHNCSVGCNISIGERYGEIRRIENRYHENINHYLICDLGRFGYSHTNLNT) constitute a 4Fe-4S Mo/W bis-MGD-type domain.

The protein belongs to the complex I 75 kDa subunit family. In terms of assembly, composed of 13 different subunits. Subunits NuoCD, E, F, and G constitute the peripheral sector of the complex. It depends on [2Fe-2S] cluster as a cofactor. The cofactor is [4Fe-4S] cluster.

It carries out the reaction a quinone + NADH + 5 H(+)(in) = a quinol + NAD(+) + 4 H(+)(out). Functionally, NDH-1 shuttles electrons from NADH, via FMN and iron-sulfur (Fe-S) centers, to quinones in the respiratory chain. Couples the redox reaction to proton translocation (for every two electrons transferred, four hydrogen ions are translocated across the cytoplasmic membrane), and thus conserves the redox energy in a proton gradient. The protein is NADH-quinone oxidoreductase subunit G (nuoG) of Buchnera aphidicola subsp. Acyrthosiphon pisum (strain APS) (Acyrthosiphon pisum symbiotic bacterium).